We begin with the raw amino-acid sequence, 305 residues long: Ribonuclease BN (305 aa).

Zn(2+)-binding residues include His64, His66, Asp68, His69, His141, Asp212, and His270. Asp68 serves as the catalytic Proton acceptor.

The protein belongs to the RNase Z family. RNase BN subfamily. As to quaternary structure, homodimer. The cofactor is Zn(2+).

Zinc phosphodiesterase, which has both exoribonuclease and endoribonuclease activities. This is Ribonuclease BN from Enterobacter sp. (strain 638).